The chain runs to 356 residues: Decorin (356 aa).

Positions 1–15 are cleaved as a signal peptide; that stretch reads MRLVLFILLLPVCLA. A propeptide spanning residues 16–29 is cleaved from the precursor; it reads TPFHQKGLFDFMLE. S45 is a glycosylation site (O-linked (Xyl...) (glycosaminoglycan) serine). Cystine bridges form between C51–C57 and C55–C64. LRR repeat units follow at residues 70–90, 91–114, 115–138, 139–159, 160–183, 184–209, 210–230, 231–254, 255–278, 279–301, 302–331, and 332–356; these read ERVP…NNKI, TEIR…NNKI, SKIS…KNNL, KELP…ENEI, SKLR…TNPL, KSSG…DTNI, TSIP…GNKI, SKID…FNSI, SSVE…NNEL, VRVP…NNKI, ASIG…SNPV, and QYWE…GNYK. N-linked (GlcNAc...) asparagine glycosylation occurs at N208. N-linked (GlcNAc...) asparagine glycosylation is present at N259. Cysteines 310 and 343 form a disulfide.

It belongs to the small leucine-rich proteoglycan (SLRP) family. SLRP class I subfamily. In terms of assembly, binds to type I and type II collagen, to fibronectin and TGF-beta. Forms a ternary complex with MFAP2 and ELN. The attached glycosaminoglycan chain can be either chondroitin sulfate or dermatan sulfate depending upon the tissue of origin.

Its subcellular location is the secreted. The protein resides in the extracellular space. It is found in the extracellular matrix. May affect the rate of fibrils formation. The protein is Decorin (DCN) of Coturnix japonica (Japanese quail).